Consider the following 359-residue polypeptide: 3-isopropylmalate dehydrogenase (359 aa).

G74–E85 is a binding site for NAD(+). Residues R92, R102, R131, and D220 each contribute to the substrate site. Residues D220, D245, and D249 each contribute to the Mg(2+) site. An NAD(+)-binding site is contributed by G284 to N295.

It belongs to the isocitrate and isopropylmalate dehydrogenases family. As to quaternary structure, homodimer. Mg(2+) serves as cofactor. The cofactor is Mn(2+).

The protein resides in the cytoplasm. It catalyses the reaction (2R,3S)-3-isopropylmalate + NAD(+) = 4-methyl-2-oxopentanoate + CO2 + NADH. It participates in amino-acid biosynthesis; L-leucine biosynthesis; L-leucine from 3-methyl-2-oxobutanoate: step 3/4. In terms of biological role, catalyzes the oxidation of 3-carboxy-2-hydroxy-4-methylpentanoate (3-isopropylmalate) to 3-carboxy-4-methyl-2-oxopentanoate. The product decarboxylates to 4-methyl-2 oxopentanoate. The chain is 3-isopropylmalate dehydrogenase (LEU2) from Kluyveromyces marxianus (Yeast).